The chain runs to 291 residues: Protein-export membrane protein SecF (291 aa).

6 consecutive transmembrane segments (helical) span residues 19-39 (LVVIPLIILAVALLIIASWYV), 134-154 (LALGGVGVAFLGMSVLVFLMF), 156-176 (VFVPSIAVVVSAFSDIAISVA), 187-209 (LGTVAALLMIIGYSVDSDILLNN), 226-246 (MRTGVTMTLTSIIAMSVMAAV), and 256-278 (AAIGTVLVFGLIADLMNTYLLNL).

It belongs to the SecD/SecF family. SecF subfamily. In terms of assembly, part of the protein translocation apparatus. Forms a complex with SecD.

The protein resides in the cell membrane. Involved in protein export. The sequence is that of Protein-export membrane protein SecF from Haloquadratum walsbyi (strain DSM 16790 / HBSQ001).